The sequence spans 872 residues: Probable LRR receptor-like serine/threonine-protein kinase At1g51880 (872 aa).

The first 23 residues, 1–23 (MKSIHGFLLFLITAYVILESVQA), serve as a signal peptide directing secretion. At 24-513 (QDQLGFISLD…GKSKKVPMIP (490 aa)) the chain is on the extracellular side. N-linked (GlcNAc...) asparagine glycans are attached at residues N40, N49, N96, N181, N255, N268, N294, N339, and N401. 3 LRR repeats span residues 411-434 (RIISLNLAENKLTGTITPEISKLT), 435-457 (QLIELDLSKNDLSGEIPEFFADM), and 459-482 (LLKLINLSGNLGLNSTIPDSIQQR). N-linked (GlcNAc...) asparagine glycans are attached at residues N464 and N472. A helical membrane pass occupies residues 514 to 534 (IVASVAGVFALLVILAIFFVV). The Cytoplasmic segment spans residues 535 to 872 (RRKNGESNKG…SASEFSPGAR (338 aa)). A Phosphothreonine modification is found at T557. The Protein kinase domain occupies 566–838 (NNFERVLGKG…HVVTELNECV (273 aa)). ATP is bound by residues 572–580 (LGKGGFGTV) and K593. Y638 carries the post-translational modification Phosphotyrosine. Catalysis depends on D690, which acts as the Proton acceptor. Position 724 is a phosphoserine (S724). 2 positions are modified to phosphothreonine: T725 and T730. The residue at position 738 (Y738) is a Phosphotyrosine.

Belongs to the protein kinase superfamily. Ser/Thr protein kinase family.

Its subcellular location is the membrane. The enzyme catalyses L-seryl-[protein] + ATP = O-phospho-L-seryl-[protein] + ADP + H(+). The catalysed reaction is L-threonyl-[protein] + ATP = O-phospho-L-threonyl-[protein] + ADP + H(+). The chain is Probable LRR receptor-like serine/threonine-protein kinase At1g51880 from Arabidopsis thaliana (Mouse-ear cress).